The following is a 418-amino-acid chain: Equilibrative nucleotide transporter 4 (418 aa).

11 helical membrane passes run 20–40, 54–74, 85–105, 108–128, 147–169, 186–206, 264–284, 291–311, 326–346, 353–373, and 392–412; these read MVVCCILGIGSLFSWNSMLTI, SRVFTLIYQPIALGTIMILAY, ILTGYILFTISTFLLIVLDLT, GHGGIGHYIVLCTIVASFGLA, LIQSYMAGSGMAGALTSVLRLIT, IFLAISTFIELLCVILYAYVF, HAVNLFLIYVLTLSIFPGFLY, GLGDWYALILVATYNFWDLFG, KALTIAVLTRYFLVPAFYFTA, WMIMLVSILGLTTGHLTVCIM, and LVVFILGGAVVGISLGWLWLI.

The protein belongs to the SLC29A/ENT transporter (TC 2.A.57) family. Expressed in leaves and at lowe levels in stems and flowers.

The protein localises to the cell membrane. Nucleoside transporter that can mediate uptake of adenosine, uridine, guanosine or cytidine when expressed in a heterologous system (yeast). This Arabidopsis thaliana (Mouse-ear cress) protein is Equilibrative nucleotide transporter 4 (ENT4).